The sequence spans 106 residues: MAGSALAVRARFGVWGMKVLQTRGFVSDSSDSMDTGAGSIREAGGAFGKREKAEEDRYFREKTKEQLAALRKHHEDEIDHHSKEIERLQKQIERHKKKIQQLKNNH.

The N-terminal 25 residues, 1–25 (MAGSALAVRARFGVWGMKVLQTRGF), are a transit peptide targeting the mitochondrion. An N-terminal inhibitory region region spans residues 26–52 (VSDSSDSMDTGAGSIREAGGAFGKREK). Positions 26-58 (VSDSSDSMDTGAGSIREAGGAFGKREKAEEDRY) are disordered. Ser-39 carries the phosphoserine modification. Residues 48-58 (GKREKAEEDRY) show a composition bias toward basic and acidic residues. Positions 60–106 (REKTKEQLAALRKHHEDEIDHHSKEIERLQKQIERHKKKIQQLKNNH) form a coiled coil. The segment at 74–106 (HEDEIDHHSKEIERLQKQIERHKKKIQQLKNNH) is antiparallel alpha-helical coiled coil region. The residue at position 103 (Lys-103) is an N6-succinyllysine.

It belongs to the ATPase inhibitor family. In terms of assembly, homodimer; represents the active form and is present at a pH value below 6.5. Homotetramer; represents the inactive form and is present at a pH value above 7.0.

Its subcellular location is the mitochondrion. Endogenous F(1)F(o)-ATPase inhibitor limiting ATP depletion when the mitochondrial membrane potential falls below a threshold and the F(1)F(o)-ATP synthase starts hydrolyzing ATP to pump protons out of the mitochondrial matrix. Required to avoid the consumption of cellular ATP when the F(1)F(o)-ATP synthase enzyme acts as an ATP hydrolase. Indirectly acts as a regulator of heme synthesis in erythroid tissues: regulates heme synthesis by modulating the mitochondrial pH and redox potential, allowing FECH to efficiently catalyze the incorporation of iron into protoporphyrin IX to produce heme. This is ATPase inhibitor, mitochondrial from Mus musculus (Mouse).